A 193-amino-acid chain; its full sequence is Recombination protein RecR (193 aa).

The C4-type zinc-finger motif lies at 61 to 76 (CASCNALSESEICEIC). The Toprim domain occupies 84 to 170 (SQLCMVLHPR…TFTKIAQGVP (87 aa)).

The protein belongs to the RecR family.

In terms of biological role, may play a role in DNA repair. It seems to be involved in an RecBC-independent recombinational process of DNA repair. It may act with RecF and RecO. The protein is Recombination protein RecR of Helicobacter pylori (strain Shi470).